The following is a 31-amino-acid chain: Protamine-Z (31 aa).

Residues 1-31 form a disordered region; that stretch reads ARRRRSRRASRPVRRRRPRRVSRRRRARRRR.

As to expression, testis.

It is found in the nucleus. The protein localises to the chromosome. Protamines substitute for histones in the chromatin of sperm during the haploid phase of spermatogenesis. They compact sperm DNA into a highly condensed, stable and inactive complex. This chain is Protamine-Z, found in Clupea harengus (Atlantic herring).